Consider the following 294-residue polypeptide: UDP-3-O-acyl-N-acetylglucosamine deacetylase (294 aa).

Residues His75, His232, and Asp236 each contribute to the Zn(2+) site. The Proton donor role is filled by His259.

The protein belongs to the LpxC family. The cofactor is Zn(2+).

It catalyses the reaction a UDP-3-O-[(3R)-3-hydroxyacyl]-N-acetyl-alpha-D-glucosamine + H2O = a UDP-3-O-[(3R)-3-hydroxyacyl]-alpha-D-glucosamine + acetate. Its pathway is glycolipid biosynthesis; lipid IV(A) biosynthesis; lipid IV(A) from (3R)-3-hydroxytetradecanoyl-[acyl-carrier-protein] and UDP-N-acetyl-alpha-D-glucosamine: step 2/6. Its function is as follows. Catalyzes the hydrolysis of UDP-3-O-myristoyl-N-acetylglucosamine to form UDP-3-O-myristoylglucosamine and acetate, the committed step in lipid A biosynthesis. In Campylobacter concisus (strain 13826), this protein is UDP-3-O-acyl-N-acetylglucosamine deacetylase.